The primary structure comprises 660 residues: Polyadenylation factor subunit 2 (660 aa).

Positions 1-12 are enriched in basic and acidic residues; it reads MSYEPRGDHDKG. The disordered stretch occupies residues 1–32; sequence MSYEPRGDHDKGYGGGGGHDGLPPRNRGRRPV. WD repeat units lie at residues 94–133, 136–176, 177–216, 219–258, 261–301, 304–344, and 376–415; these read KIKH…FETI, AHDS…ESIR, GHTD…TDMT, GHGW…CLTT, GHKN…DIAL, GHEK…TAPD, and AHDF…EAPE. Positions 562-660 are disordered; sequence KAGYQPPPPP…QSKGNYTRVR (99 aa). A compositionally biased stretch (pro residues) spans 566-610; it reads QPPPPPGSAGAPMPPPGILPPGLIPPPGAAGFPMPPPGFAPPPLI.

The protein resides in the nucleus. Its function is as follows. Required for 3'-end cleavage and polyadenylation of pre-mRNAs. Also involved in chromosome segregation where it has a role in chromosome attachment to the mitotic spindle. This Neurospora crassa (strain ATCC 24698 / 74-OR23-1A / CBS 708.71 / DSM 1257 / FGSC 987) protein is Polyadenylation factor subunit 2 (paa-1).